Reading from the N-terminus, the 688-residue chain is Glycine--tRNA ligase beta subunit (688 aa).

Belongs to the class-II aminoacyl-tRNA synthetase family. As to quaternary structure, tetramer of two alpha and two beta subunits.

The protein resides in the cytoplasm. The enzyme catalyses tRNA(Gly) + glycine + ATP = glycyl-tRNA(Gly) + AMP + diphosphate. The polypeptide is Glycine--tRNA ligase beta subunit (Actinobacillus pleuropneumoniae serotype 7 (strain AP76)).